Reading from the N-terminus, the 265-residue chain is Apolipoprotein A-I (265 aa).

An N-terminal signal peptide occupies residues 1–18 (MKALVLTLAVLFFTGSQA). Repeat copies occupy residues 67–88 (LKLL…EQLG) and 89–110 (PVTQ…QEMN). Positions 67 to 265 (LKLLDNWDSL…DEASKKLNAQ (199 aa)) are 10 X approximate tandem repeats. The residue at position 109 (Met109) is a Methionine sulfoxide. A 3; half-length repeat occupies 111-121 (KDLEEVKQKVQ). Tandem repeats lie at residues 122-142 (PYLD…RQKV), 144-165 (PLGE…DKLT), 166-187 (PLAE…QQLA), 188-209 (PYSD…EGGG), and 210-230 (SLAE…EKAK). The stretch at 231–241 (PALEDLRQGLL) is one 9; half-length repeat. Copy 10 of the repeat occupies 242–265 (PVLESLKVSILAAIDEASKKLNAQ).

This sequence belongs to the apolipoprotein A1/A4/E family. As to quaternary structure, homodimer. Interacts with APOA1BP and CLU. Component of a sperm activating protein complex (SPAP), consisting of APOA1, an immunoglobulin heavy chain, an immunoglobulin light chain and albumin. Interacts with NDRG1. Interacts with SCGB3A2. Interacts with NAXE and YJEFN3. Post-translationally, glycosylated. In terms of processing, palmitoylated. Phosphorylation sites are present in the extracellular medium. Major protein of plasma HDL, also found in chylomicrons.

It localises to the secreted. In terms of biological role, participates in the reverse transport of cholesterol from tissues to the liver for excretion by promoting cholesterol efflux from tissues and by acting as a cofactor for the lecithin cholesterol acyltransferase (LCAT). As part of the SPAP complex, activates spermatozoa motility. The protein is Apolipoprotein A-I (APOA1) of Physeter macrocephalus (Sperm whale).